Here is a 189-residue protein sequence, read N- to C-terminus: UPF0301 protein PputW619_0469 (189 aa).

It belongs to the UPF0301 (AlgH) family.

The chain is UPF0301 protein PputW619_0469 from Pseudomonas putida (strain W619).